We begin with the raw amino-acid sequence, 318 residues long: Methionyl-tRNA formyltransferase (318 aa).

113–116 serves as a coordination point for (6S)-5,6,7,8-tetrahydrofolate; that stretch reads SLLP.

This sequence belongs to the Fmt family.

The catalysed reaction is L-methionyl-tRNA(fMet) + (6R)-10-formyltetrahydrofolate = N-formyl-L-methionyl-tRNA(fMet) + (6S)-5,6,7,8-tetrahydrofolate + H(+). Its function is as follows. Attaches a formyl group to the free amino group of methionyl-tRNA(fMet). The formyl group appears to play a dual role in the initiator identity of N-formylmethionyl-tRNA by promoting its recognition by IF2 and preventing the misappropriation of this tRNA by the elongation apparatus. This Hahella chejuensis (strain KCTC 2396) protein is Methionyl-tRNA formyltransferase.